The sequence spans 161 residues: MPSFDIVSKVDMQEVDNAVNQAVKEIGQRYDFKGSKSEVTLEKDAIKILADDDFRLKAIVDILQSKFIKRGISPKALQYGKAETASGGMVRQIITVQQGISKEKGKEVVAVIKDTKLKVQGQIQDDQVRVTGKNRDDLQEAIRTLKGKDLGIELQFVNFRD.

Belongs to the YajQ family.

Nucleotide-binding protein. The protein is Nucleotide-binding protein Gmet_3206 of Geobacter metallireducens (strain ATCC 53774 / DSM 7210 / GS-15).